The primary structure comprises 392 residues: tRNA (guanine-N(7)-)-methyltransferase (392 aa).

Residues glutamate 123, glutamate 148, and aspartate 175 each coordinate S-adenosyl-L-methionine. Substrate-binding residues include lysine 201 and aspartate 231.

This sequence belongs to the class I-like SAM-binding methyltransferase superfamily. TrmB family.

The catalysed reaction is guanosine(46) in tRNA + S-adenosyl-L-methionine = N(7)-methylguanosine(46) in tRNA + S-adenosyl-L-homocysteine. It functions in the pathway tRNA modification; N(7)-methylguanine-tRNA biosynthesis. In terms of biological role, catalyzes the formation of N(7)-methylguanine at position 46 (m7G46) in tRNA. The chain is tRNA (guanine-N(7)-)-methyltransferase from Campylobacter jejuni (strain RM1221).